Reading from the N-terminus, the 369-residue chain is Cytoplasmic tRNA 2-thiolation protein 1 (369 aa).

It belongs to the TtcA family. CTU1/NCS6/ATPBD3 subfamily.

Its subcellular location is the cytoplasm. It functions in the pathway tRNA modification; 5-methoxycarbonylmethyl-2-thiouridine-tRNA biosynthesis. In terms of biological role, plays a central role in 2-thiolation of mcm(5)S(2)U at tRNA wobble positions of tRNA(Lys), tRNA(Glu) and tRNA(Gln). Directly binds tRNAs and probably acts by catalyzing adenylation of tRNAs, an intermediate required for 2-thiolation. It is unclear whether it acts as a sulfurtransferase that transfers sulfur from thiocarboxylated URM1 onto the uridine of tRNAs at wobble position. Prior mcm(5) tRNA modification by the elongator complex is required for 2-thiolation. May also be involved in protein urmylation. In Cryptococcus neoformans var. neoformans serotype D (strain JEC21 / ATCC MYA-565) (Filobasidiella neoformans), this protein is Cytoplasmic tRNA 2-thiolation protein 1.